The primary structure comprises 507 residues: Monoogygenase CPUR_05431 (507 aa).

The protein belongs to the PheA/TfdB FAD monooxygenase family. Requires FAD as cofactor.

It functions in the pathway pigment biosynthesis. Monoogygenase; part of the ergochrome gene cluster responsible for the typical purple-black color of the ergot sclerotia. The ergochrome gene cluster produces several ergot pigments including the yellow ergochrome secalonic acid and its derivatives, as well as the red anthraquinones endocrocin and clavorubin. The pathway begins with the synthesis of atrochrysone thioester by the polyketide synthase (PKS) CPUR_05437. The atrochrysone carboxyl ACP thioesterase CPUR_05436 then breaks the thioester bond and releases the atrochrysone carboxylic acid from CPUR_05437. The atrochrysone carboxylic acid is then converted to atrochrysone which is further transformed into emodin anthrone. The next step is performed by the anthrone oxygenase CPUR_05434 that catalyzes the oxidation of emodinanthrone to emodin. Emodin is further modified to yield monodictyphenone via several steps involving CPUR_05427, CPUR_05428, CPUR_05429 and CPUR_05430. The short chain dehydrogenase/reductase CPUR_05418 then catalyzes the C-5 ketoreduction to give the xanthone skeleton of the monomeric units. Ergochromes formation requires further dimerization steps of different xanthone units, probably catalyzed by the cytochrome P450 monooxygenase CPUR_05419. CPUR_05425, CPUR_05426 and CPUR_05431 are unique to Claviceps, thus it is likely that they are involved in further modification of xanthone units or in their dimerization. The yellow ergochromes and the red anthraquinone pigments endocrocin and clavorubin are products from the same PKS derived precursors and the latter are likely shunt products in the pathway of xanthone biosynthesis. It is proposed that atrochrysone carboxylic acid released from the PKS CPUR_05437 can also be converted to endocrocin anthrone which is further oxidized into endocrocin by CPUR_05435. Endocrocin could be then modified to clavorubin, possibly by CPUR_05423 and CPUR_05431. Clavorubin is the principal anthraquinone metabolite produced by the cluster with a much higher yield compared to endocrocin. This Claviceps purpurea (strain 20.1) (Ergot fungus) protein is Monoogygenase CPUR_05431.